The sequence spans 351 residues: Phosphatidylinositol transfer protein PDR16 (351 aa).

Residues 135-295 (LVAVENESGK…LYGGDLKFKY (161 aa)) form the CRAL-TRIO domain.

In terms of assembly, homodimer. Apo-SFH3 forms a dimer through the hydrophobic interaction of gating helices. Binding of phosphatidylinositol leads to dissociation of the dimer into monomers in a reversible manner.

Its subcellular location is the lipid droplet. The protein localises to the microsome membrane. The protein resides in the endoplasmic reticulum membrane. It carries out the reaction a 1,2-diacyl-sn-glycero-3-phospho-(1D-myo-inositol)(in) = a 1,2-diacyl-sn-glycero-3-phospho-(1D-myo-inositol)(out). Has phosphatidylinositol transfer activity. Involved in the regulation of the phospholipid composition of plasma- and endomembranes. Altering plasma membrane composition may provide a possible mechanism for multidrug resistance. Involved in the regulation of sterol biosynthesis. Contributes to efficient phospholipase D1 activation in the regulation of phospholipid turnover. Regulates the release of fatty acids from lipid droplets. The sequence is that of Phosphatidylinositol transfer protein PDR16 (PDR16) from Saccharomyces cerevisiae (strain ATCC 204508 / S288c) (Baker's yeast).